Here is a 297-residue protein sequence, read N- to C-terminus: ATP synthase subunit a (297 aa).

8 helical membrane-spanning segments follow: residues 38-58 (PLIP…IAIL), 77-97 (GYVL…VDLL), 107-127 (LFII…VGGI), 133-153 (SSTV…IMGV), 174-194 (TIPL…LLSI), 202-222 (VLAG…FFTL), 230-250 (VGLV…HVYF), and 252-272 (ILVS…YWSQ).

It belongs to the ATPase A chain family. F-type ATPases have 2 components, CF(1) - the catalytic core - and CF(0) - the membrane proton channel. CF(1) has five subunits: alpha(3), beta(3), gamma(1), delta(1), epsilon(1). CF(0) has three main subunits: a(1), b(2) and c(9-12). The alpha and beta chains form an alternating ring which encloses part of the gamma chain. CF(1) is attached to CF(0) by a central stalk formed by the gamma and epsilon chains, while a peripheral stalk is formed by the delta and b chains.

The protein resides in the cell membrane. Key component of the proton channel; it plays a direct role in the translocation of protons across the membrane. The sequence is that of ATP synthase subunit a from Mycoplasmoides gallisepticum (strain R(low / passage 15 / clone 2)) (Mycoplasma gallisepticum).